We begin with the raw amino-acid sequence, 614 residues long: Aspartate--tRNA ligase (614 aa).

Glu174 is a binding site for L-aspartate. An aspartate region spans residues 198-201; sequence QLFK. Arg220 lines the L-aspartate pocket. ATP is bound by residues 220–222 and Gln229; that span reads RDE. Residue His448 participates in L-aspartate binding. Glu482 contacts ATP. Arg489 serves as a coordination point for L-aspartate. 534-537 lines the ATP pocket; sequence GLDR.

The protein belongs to the class-II aminoacyl-tRNA synthetase family. Type 1 subfamily. In terms of assembly, homodimer.

Its subcellular location is the cytoplasm. The enzyme catalyses tRNA(Asp) + L-aspartate + ATP = L-aspartyl-tRNA(Asp) + AMP + diphosphate. Functionally, catalyzes the attachment of L-aspartate to tRNA(Asp) in a two-step reaction: L-aspartate is first activated by ATP to form Asp-AMP and then transferred to the acceptor end of tRNA(Asp). The sequence is that of Aspartate--tRNA ligase from Lactobacillus acidophilus (strain ATCC 700396 / NCK56 / N2 / NCFM).